Consider the following 414-residue polypeptide: Esterase FrsA (414 aa).

Belongs to the FrsA family.

It catalyses the reaction a carboxylic ester + H2O = an alcohol + a carboxylate + H(+). Catalyzes the hydrolysis of esters. The polypeptide is Esterase FrsA (Escherichia coli O6:K15:H31 (strain 536 / UPEC)).